The chain runs to 201 residues: Glutathione peroxidase 1 (201 aa).

Phosphoserine is present on residues Ser-7 and Ser-32. Sec-47 is an active-site residue. Position 47 (Sec-47) is a non-standard amino acid, selenocysteine. Lys-62, Lys-86, and Lys-112 each carry N6-acetyllysine; alternate. An N6-succinyllysine; alternate mark is found at Lys-62, Lys-86, and Lys-112. An N6-acetyllysine modification is found at Lys-119. The residue at position 146 (Lys-146) is an N6-acetyllysine; alternate. N6-succinyllysine; alternate is present on Lys-146. A Phosphoserine modification is found at Ser-195.

The protein belongs to the glutathione peroxidase family. In terms of assembly, homotetramer. Interacts with MIEN1. During periods of oxidative stress, Sec-47 may react with a superoxide radical, irreversibly lose hydroselenide and be converted to dehydroalanine. In terms of tissue distribution, expressed in liver, kidney, lung, brain and heart.

Its subcellular location is the cytoplasm. The protein resides in the mitochondrion. The catalysed reaction is 2 glutathione + H2O2 = glutathione disulfide + 2 H2O. It carries out the reaction a hydroperoxy polyunsaturated fatty acid + 2 glutathione = a hydroxy polyunsaturated fatty acid + glutathione disulfide + H2O. It catalyses the reaction tert-butyl hydroperoxide + 2 glutathione = tert-butanol + glutathione disulfide + H2O. The enzyme catalyses cumene hydroperoxide + 2 glutathione = 2-phenylpropan-2-ol + glutathione disulfide + H2O. The catalysed reaction is (13S)-hydroperoxy-(9Z,11E)-octadecadienoate + 2 glutathione = (13S)-hydroxy-(9Z,11E)-octadecadienoate + glutathione disulfide + H2O. It carries out the reaction (9S)-hydroperoxy-(10E,12Z)-octadecadienoate + 2 glutathione = (9S)-hydroxy-(10E,12Z)-octadecadienoate + glutathione disulfide + H2O. It catalyses the reaction (5S)-hydroperoxy-(6E,8Z,11Z,14Z)-eicosatetraenoate + 2 glutathione = (5S)-hydroxy-(6E,8Z,11Z,14Z)-eicosatetraenoate + glutathione disulfide + H2O. The enzyme catalyses (12S)-hydroperoxy-(5Z,8Z,10E,14Z)-eicosatetraenoate + 2 glutathione = (12S)-hydroxy-(5Z,8Z,10E,14Z)-eicosatetraenoate + glutathione disulfide + H2O. The catalysed reaction is (12R)-hydroperoxy-(5Z,8Z,10E,14Z)-eicosatetraenoate + 2 glutathione = (12R)-hydroxy-(5Z,8Z,10E,14Z)-eicosatetraenoate + glutathione disulfide + H2O. It carries out the reaction (15S)-hydroperoxy-(5Z,8Z,11Z,13E)-eicosatetraenoate + 2 glutathione = (15S)-hydroxy-(5Z,8Z,11Z,13E)-eicosatetraenoate + glutathione disulfide + H2O. It catalyses the reaction (5S)-hydroperoxy-(6E,8Z,11Z,14Z,17Z)-eicosapentaenoate + 2 glutathione = (5S)-hydroxy-(6E,8Z,11Z,14Z,17Z)-eicosapentaenoate + glutathione disulfide + H2O. The enzyme catalyses (12S)-hydroperoxy-(5Z,8Z,10E,14Z,17Z)-eicosapentaenoate + 2 glutathione = (12S)-hydroxy-(5Z,8Z,10E,14Z,17Z)-eicosapentaenoate + glutathione disulfide + H2O. The catalysed reaction is (15S)-hydroperoxy-(5Z,8Z,11Z,13E,17Z)-eicosapentaenoate + 2 glutathione = (15S)-hydroxy-(5Z,8Z,11Z,13E,17Z)-eicosapentaenoate + glutathione disulfide + H2O. It carries out the reaction (15S)-hydroperoxy-(11Z,13E)-eicosadienoate + 2 glutathione = (15S)-hydroxy-(11Z,13E)-eicosadienoate + glutathione disulfide + H2O. It catalyses the reaction (17S)-hydroperoxy-(4Z,7Z,10Z,13Z,15E,19Z)-docosahexaenoate + 2 glutathione = (17S)-hydroxy-(4Z,7Z,10Z,13Z,15E,19Z)-docosahexaenoate + glutathione disulfide + H2O. In terms of biological role, catalyzes the reduction of hydroperoxides in a glutathione-dependent manner thus regulating cellular redox homeostasis. Can reduce small soluble hydroperoxides such as H2O2, cumene hydroperoxide and tert-butyl hydroperoxide, as well as several fatty acid-derived hydroperoxides. In platelets catalyzes the reduction of 12-hydroperoxyeicosatetraenoic acid, the primary product of the arachidonate 12-lipoxygenase pathway. This Mus musculus (Mouse) protein is Glutathione peroxidase 1.